We begin with the raw amino-acid sequence, 220 residues long: ATP phosphoribosyltransferase (220 aa).

Belongs to the ATP phosphoribosyltransferase family. Short subfamily. As to quaternary structure, heteromultimer composed of HisG and HisZ subunits.

It is found in the cytoplasm. It carries out the reaction 1-(5-phospho-beta-D-ribosyl)-ATP + diphosphate = 5-phospho-alpha-D-ribose 1-diphosphate + ATP. Its pathway is amino-acid biosynthesis; L-histidine biosynthesis; L-histidine from 5-phospho-alpha-D-ribose 1-diphosphate: step 1/9. Its function is as follows. Catalyzes the condensation of ATP and 5-phosphoribose 1-diphosphate to form N'-(5'-phosphoribosyl)-ATP (PR-ATP). Has a crucial role in the pathway because the rate of histidine biosynthesis seems to be controlled primarily by regulation of HisG enzymatic activity. The sequence is that of ATP phosphoribosyltransferase from Janthinobacterium sp. (strain Marseille) (Minibacterium massiliensis).